Consider the following 190-residue polypeptide: Nucleoside triphosphate pyrophosphatase (190 aa).

The active-site Proton acceptor is D69.

It belongs to the Maf family. The cofactor is a divalent metal cation.

The protein resides in the cytoplasm. It carries out the reaction a ribonucleoside 5'-triphosphate + H2O = a ribonucleoside 5'-phosphate + diphosphate + H(+). The enzyme catalyses a 2'-deoxyribonucleoside 5'-triphosphate + H2O = a 2'-deoxyribonucleoside 5'-phosphate + diphosphate + H(+). Its function is as follows. Nucleoside triphosphate pyrophosphatase. May have a dual role in cell division arrest and in preventing the incorporation of modified nucleotides into cellular nucleic acids. The sequence is that of Nucleoside triphosphate pyrophosphatase from Helicobacter pylori (strain Shi470).